Here is a 359-residue protein sequence, read N- to C-terminus: Glycerol-1-phosphate dehydrogenase [NAD(P)+] (359 aa).

NAD(+) is bound by residues 107 to 111 and 129 to 132; these read GRVID and TAAS. Position 134 (Asp134) interacts with substrate. NAD(+) is bound at residue Ser138. Asp181 contributes to the substrate binding site. Positions 181 and 261 each coordinate Zn(2+). Position 265 (His265) interacts with substrate. Residue His277 participates in Zn(2+) binding.

This sequence belongs to the glycerol-1-phosphate dehydrogenase family. It depends on Zn(2+) as a cofactor.

It is found in the cytoplasm. It catalyses the reaction sn-glycerol 1-phosphate + NAD(+) = dihydroxyacetone phosphate + NADH + H(+). The enzyme catalyses sn-glycerol 1-phosphate + NADP(+) = dihydroxyacetone phosphate + NADPH + H(+). It functions in the pathway membrane lipid metabolism; glycerophospholipid metabolism. In terms of biological role, catalyzes the NAD(P)H-dependent reduction of dihydroxyacetonephosphate (DHAP or glycerone phosphate) to glycerol 1-phosphate (G1P). The G1P thus generated is used as the glycerophosphate backbone of phospholipids in the cellular membranes of Archaea. This chain is Glycerol-1-phosphate dehydrogenase [NAD(P)+], found in Methanosphaerula palustris (strain ATCC BAA-1556 / DSM 19958 / E1-9c).